Reading from the N-terminus, the 542-residue chain is MLO-like protein 7 (542 aa).

Topologically, residues 1–38 (MITRSRCRRSLLWFLVFHGGATATGAPSGGKELSQTPT) are extracellular. Residues 39-59 (WAVAVVCTFLILISHLLEKGL) traverse the membrane as a helical segment. Over 60–82 (QRLANWLWKKHKNSLLEALEKIK) the chain is Cytoplasmic. Residues 83-103 (AELMILGFISLLLTFGEPYIL) traverse the membrane as a helical segment. Topologically, residues 104–165 (KICVPRKAAL…ITLKGLHQLH (62 aa)) are extracellular. The helical transmembrane segment at 166–186 (ILLFFLAIFHIVYSLITMMLS) threads the bilayer. Over 187–288 (RLKIRGWKKW…IKRSLEDDFK (102 aa)) the chain is Cytoplasmic. A helical transmembrane segment spans residues 289–309 (LVVGISPVLWASFVIFLLFNV). Residues 310–315 (NGWRTL) lie on the Extracellular side of the membrane. A helical membrane pass occupies residues 316–336 (FWASIPPLLIILAVGTKLQAI). Residues 337–374 (MATMALEIVETHAVVQGMPLVQGSDRYFWFDCPQLLLH) are Cytoplasmic-facing. A helical transmembrane segment spans residues 375 to 395 (LIHFALFQNAFQITHFFWIWY). Residues 396-414 (SFGLKSCFHKDFNLVVSKL) lie on the Extracellular side of the membrane. Residues 415 to 435 (FLCLGALILCSYITLPLYALV) traverse the membrane as a helical segment. Residues 436-542 (TQMGSHMKKA…QQQEMQFHNS (107 aa)) lie on the Cytoplasmic side of the membrane. Residues 449–470 (EQMAKALKKWHKDIKLKKGKAR) form a calmodulin-binding region.

The protein belongs to the MLO family. Restricted to pollen, synergids, pistils and immature anthers. Also detected in seedlings, leaves, stems and inflorescens.

It is found in the cell membrane. The protein localises to the endomembrane system. May be involved in modulation of pathogen defense and leaf cell death. Activity seems to be regulated by Ca(2+)-dependent calmodulin binding and seems not to require heterotrimeric G proteins. Controls pollen tube reception in the female gametophyte synergids. The chain is MLO-like protein 7 (MLO7) from Arabidopsis thaliana (Mouse-ear cress).